A 160-amino-acid polypeptide reads, in one-letter code: Cytochrome b6-f complex subunit 4 (160 aa).

3 helical membrane-spanning segments follow: residues 36 to 56 (LLYI…GLAI), 95 to 115 (LLGV…PFLE), and 131 to 151 (TVFL…TLPI).

Belongs to the cytochrome b family. PetD subfamily. The 4 large subunits of the cytochrome b6-f complex are cytochrome b6, subunit IV (17 kDa polypeptide, petD), cytochrome f and the Rieske protein, while the 4 small subunits are petG, petL, petM and petN. The complex functions as a dimer.

It is found in the plastid. It localises to the chloroplast thylakoid membrane. In terms of biological role, component of the cytochrome b6-f complex, which mediates electron transfer between photosystem II (PSII) and photosystem I (PSI), cyclic electron flow around PSI, and state transitions. The sequence is that of Cytochrome b6-f complex subunit 4 from Oenothera elata subsp. hookeri (Hooker's evening primrose).